A 129-amino-acid chain; its full sequence is UPF0047 protein Mb2586c (129 aa).

Belongs to the UPF0047 family.

In Mycobacterium bovis (strain ATCC BAA-935 / AF2122/97), this protein is UPF0047 protein Mb2586c.